A 292-amino-acid chain; its full sequence is NAD kinase (292 aa).

D73 (proton acceptor) is an active-site residue. NAD(+) is bound by residues 73 to 74 (DG), 147 to 148 (NE), H158, R175, D177, 188 to 193 (TAYSLS), and Q247.

The protein belongs to the NAD kinase family. The cofactor is a divalent metal cation.

It localises to the cytoplasm. The enzyme catalyses NAD(+) + ATP = ADP + NADP(+) + H(+). Involved in the regulation of the intracellular balance of NAD and NADP, and is a key enzyme in the biosynthesis of NADP. Catalyzes specifically the phosphorylation on 2'-hydroxyl of the adenosine moiety of NAD to yield NADP. The polypeptide is NAD kinase (Shigella boydii serotype 18 (strain CDC 3083-94 / BS512)).